The sequence spans 874 residues: Alanine--tRNA ligase (874 aa).

Zn(2+) contacts are provided by His-564, His-568, Cys-665, and His-669.

It belongs to the class-II aminoacyl-tRNA synthetase family. Zn(2+) is required as a cofactor.

The protein localises to the cytoplasm. The enzyme catalyses tRNA(Ala) + L-alanine + ATP = L-alanyl-tRNA(Ala) + AMP + diphosphate. Functionally, catalyzes the attachment of alanine to tRNA(Ala) in a two-step reaction: alanine is first activated by ATP to form Ala-AMP and then transferred to the acceptor end of tRNA(Ala). Also edits incorrectly charged Ser-tRNA(Ala) and Gly-tRNA(Ala) via its editing domain. The polypeptide is Alanine--tRNA ligase (Burkholderia mallei (strain ATCC 23344)).